The chain runs to 259 residues: Transcription factor bHLH80 (259 aa).

The tract at residues 1–25 (MQSTHISGGSSGGGGGGGGEVSRSG) is disordered. Over residues 9 to 20 (GSSGGGGGGGGE) the composition is skewed to gly residues. The 51-residue stretch at 187-237 (CATHPRSIAERVRRTRISDRIRRLQELVPNMDKQTNTADMLEEAVEYVKAL) folds into the bHLH domain.

As to quaternary structure, homodimer. In terms of tissue distribution, expressed constitutively in roots, leaves, stems, and flowers.

The protein localises to the nucleus. This chain is Transcription factor bHLH80 (BHLH80), found in Arabidopsis thaliana (Mouse-ear cress).